Here is a 110-residue protein sequence, read N- to C-terminus: Large ribosomal subunit protein uL22 (110 aa).

It belongs to the universal ribosomal protein uL22 family. Part of the 50S ribosomal subunit.

Functionally, this protein binds specifically to 23S rRNA; its binding is stimulated by other ribosomal proteins, e.g. L4, L17, and L20. It is important during the early stages of 50S assembly. It makes multiple contacts with different domains of the 23S rRNA in the assembled 50S subunit and ribosome. Its function is as follows. The globular domain of the protein is located near the polypeptide exit tunnel on the outside of the subunit, while an extended beta-hairpin is found that lines the wall of the exit tunnel in the center of the 70S ribosome. This chain is Large ribosomal subunit protein uL22, found in Shewanella halifaxensis (strain HAW-EB4).